Consider the following 184-residue polypeptide: Potassium-transporting ATPase KdpC subunit (184 aa).

The chain crosses the membrane as a helical span at residues 10–30 (LTFLMVVLFAVIYPLAIYGIA).

It belongs to the KdpC family. The system is composed of three essential subunits: KdpA, KdpB and KdpC.

It localises to the cell inner membrane. Functionally, part of the high-affinity ATP-driven potassium transport (or Kdp) system, which catalyzes the hydrolysis of ATP coupled with the electrogenic transport of potassium into the cytoplasm. This subunit acts as a catalytic chaperone that increases the ATP-binding affinity of the ATP-hydrolyzing subunit KdpB by the formation of a transient KdpB/KdpC/ATP ternary complex. This chain is Potassium-transporting ATPase KdpC subunit, found in Flavobacterium psychrophilum (strain ATCC 49511 / DSM 21280 / CIP 103535 / JIP02/86).